A 303-amino-acid polypeptide reads, in one-letter code: MGRLRFVVLLSIFPIKTFSEPCSTMALVLRDSIKISEFINLSASEKLLPSALTAVKSVRISKVDKIISYENDTLSDIDLLKGVKLVENGYVCLAGLVVTGEWNLPDNCKGGVSICLVDKRMKRANEATLGSYHTSACKKRFTFKIIPNYSVTTADALKGIWQVMTNIRGVEMEKGFCPLSLEFVSICVVYLNNIKLGLREKILNVTEGGPTELTEAVVDEFVEKVPMAARLKSFRSVNKKKPSNSSKFVNGKSRLNSRNKLNYENGDSDVGISVVDDIVVGNGVSDIRIDDDCESFDAQSDSY.

This sequence belongs to the tobamovirus movement protein family.

It localises to the host cytoplasm. It is found in the host cytoskeleton. The protein localises to the host cell junction. Its subcellular location is the host plasmodesma. Functionally, transports viral genome to neighboring plant cells directly through plasmosdesmata, without any budding. The movement protein allows efficient cell to cell propagation, by bypassing the host cell wall barrier. Forms a ribonucleoprotein complex with viral RNA. Binds microtubules and modulates microtubule stability. Can bind double-stranded DNA. In Cymbidium (ORSV), this protein is Movement protein (MP).